A 39-amino-acid chain; its full sequence is Photosystem II reaction center protein L (39 aa).

Residues 18 to 38 (SLYLGLLLVFVTGVLFSSYFF) traverse the membrane as a helical segment.

The protein belongs to the PsbL family. In terms of assembly, PSII is composed of 1 copy each of membrane proteins PsbA, PsbB, PsbC, PsbD, PsbE, PsbF, PsbH, PsbI, PsbJ, PsbK, PsbL, PsbM, PsbT, PsbX, PsbY, PsbZ, Psb30/Ycf12, at least 3 peripheral proteins of the oxygen-evolving complex and a large number of cofactors. It forms dimeric complexes.

It localises to the plastid. The protein localises to the organellar chromatophore thylakoid membrane. Its function is as follows. One of the components of the core complex of photosystem II (PSII). PSII is a light-driven water:plastoquinone oxidoreductase that uses light energy to abstract electrons from H(2)O, generating O(2) and a proton gradient subsequently used for ATP formation. It consists of a core antenna complex that captures photons, and an electron transfer chain that converts photonic excitation into a charge separation. This subunit is found at the monomer-monomer interface and is required for correct PSII assembly and/or dimerization. This is Photosystem II reaction center protein L from Paulinella chromatophora.